The following is a 334-amino-acid chain: Glyceraldehyde-3-phosphate dehydrogenase (334 aa).

NAD(+) is bound by residues 12–13 and glycine 111; that span reads TI. 140-142 serves as a coordination point for D-glyceraldehyde 3-phosphate; the sequence is SCN. Residue cysteine 141 is the Nucleophile of the active site. Arginine 167 contributes to the NAD(+) binding site. 192–193 contributes to the D-glyceraldehyde 3-phosphate binding site; that stretch reads HG. Residue glutamine 298 coordinates NAD(+).

It belongs to the glyceraldehyde-3-phosphate dehydrogenase family. In terms of assembly, homotetramer.

It is found in the cytoplasm. The catalysed reaction is D-glyceraldehyde 3-phosphate + phosphate + NADP(+) = (2R)-3-phospho-glyceroyl phosphate + NADPH + H(+). The enzyme catalyses D-glyceraldehyde 3-phosphate + phosphate + NAD(+) = (2R)-3-phospho-glyceroyl phosphate + NADH + H(+). The protein operates within carbohydrate degradation; glycolysis; pyruvate from D-glyceraldehyde 3-phosphate: step 1/5. This is Glyceraldehyde-3-phosphate dehydrogenase from Thermococcus sibiricus (strain DSM 12597 / MM 739).